Consider the following 73-residue polypeptide: Beta-defensin 108B (73 aa).

The signal sequence occupies residues 1–22; that stretch reads MRIAVLLFAIFFFMSQVLPARG. 3 disulfides stabilise this stretch: cysteine 28–cysteine 55, cysteine 35–cysteine 49, and cysteine 39–cysteine 56.

Belongs to the beta-defensin family. Specifically expressed in testis. Low expression is detected also in liver.

It localises to the secreted. Functionally, has antibacterial activity. This chain is Beta-defensin 108B (DEFB108B), found in Homo sapiens (Human).